Here is a 155-residue protein sequence, read N- to C-terminus: DNA-directed RNA polymerase II subunit rpb4 (155 aa).

It belongs to the eukaryotic RPB4 RNA polymerase subunit family. In terms of assembly, component of the RNA polymerase II (Pol II) complex consisting of 12 subunits. RPB4 and RPB7 form a subcomplex that protrudes from the 10-subunit Pol II core complex.

The protein resides in the nucleus. In terms of biological role, DNA-dependent RNA polymerase catalyzes the transcription of DNA into RNA using the four ribonucleoside triphosphates as substrates. Component of RNA polymerase II which synthesizes mRNA precursors and many functional non-coding RNAs. Pol II is the central component of the basal RNA polymerase II transcription machinery. It is composed of mobile elements that move relative to each other. RPB4 is part of a subcomplex with RPB7 that binds to a pocket formed by RPB1, RPB2 and RPB6 at the base of the clamp element. The RPB4-RPB7 subcomplex seems to lock the clamp via RPB7 in the closed conformation thus preventing double-stranded DNA to enter the active site cleft. The RPB4-RPB7 subcomplex binds single-stranded DNA and RNA. This Dictyostelium discoideum (Social amoeba) protein is DNA-directed RNA polymerase II subunit rpb4 (polr2d).